Consider the following 1070-residue polypeptide: DNA double-strand break repair Rad50 ATPase (1070 aa).

ATP contacts are provided by residues Arg-12, 32–38, and Gln-142; that span reads NGSGKSS. Coiled coils occupy residues 227–257, 369–403, and 449–478; these read LEELNKKKEFAAARKGELDLRIAEYRERLQE, ECRTSIGAANKEIEGYRANIKQLEEENKRLREKAG, and LRELDSEMQSCRVAVSKGKSEIEALEKEIR. A Zinc-hook domain is found at 508–607; that stretch reads LENLEDFNEL…KLNRLKEAKK (100 aa). Positions 555 and 558 each coordinate Zn(2+). 2 coiled-coil regions span residues 570–614 and 878–908; these read TAEE…QAYD and LKRLKELKEELKALENKRLYLEAVYNNADEL. Residue 969–974 coordinates ATP; that stretch reads LLSGGE.

This sequence belongs to the SMC family. RAD50 subfamily. In terms of assembly, homodimer. Forms a heterotetramer composed of two Mre11 subunits and two Rad50 subunits. Zn(2+) is required as a cofactor.

Part of the Rad50/Mre11 complex, which is involved in the early steps of DNA double-strand break (DSB) repair. The complex may facilitate opening of the processed DNA ends to aid in the recruitment of HerA and NurA. Rad50 controls the balance between DNA end bridging and DNA resection via ATP-dependent structural rearrangements of the Rad50/Mre11 complex. The protein is DNA double-strand break repair Rad50 ATPase of Methanosarcina mazei (strain ATCC BAA-159 / DSM 3647 / Goe1 / Go1 / JCM 11833 / OCM 88) (Methanosarcina frisia).